The primary structure comprises 31 residues: QDTYLNAKKYIEFYLVVDNGMFXKYSXXFTV.

Q1 is subject to Pyrrolidone carboxylic acid. Positions 9 to 31 (KYIEFYLVVDNGMFXKYSXXFTV) constitute a Peptidase M12B domain. Ca(2+) is bound at residue E12.

As to quaternary structure, monomer. It depends on Zn(2+) as a cofactor. In terms of processing, contains 9 disulfide bonds. As to expression, expressed by the venom gland.

The protein resides in the secreted. With respect to regulation, inhibited by 1,10-phenanthroline. Snake venom zinc metalloprotease that has potent hemorrhagic activity, fibrinogenolytic activity on the alpha-subunit of human fibrinogen (FGA) in vitro and provokes necrosis in skin, muscle and lung tissues. May contribute to local edema and ecchymosis induced by venom. Hydrolyzes model substrate (beta-chain of insulin) at Ala(14)-Leu(15). This Borikenophis portoricensis (Puerto Rican racer) protein is Zinc metalloproteinase alsophinase.